We begin with the raw amino-acid sequence, 786 residues long: DNA double-strand break repair Rad50 ATPase (786 aa).

Residues K13, 33 to 39, and Q138 each bind ATP; that span reads NGSGKTT. Coiled-coil stretches lie at residues 194 to 249, 337 to 455, and 551 to 650; these read LKAE…LKSI, EKAK…RALE, and ALER…VKAL. In terms of domain architecture, Zinc-hook spans 366–459; that stretch reads EIAELQNKIN…KIRALEKYKG (94 aa). Residues C411 and C414 each coordinate Zn(2+).

It belongs to the SMC family. RAD50 subfamily. In terms of assembly, homodimer. Forms a heterotetramer composed of two Mre11 subunits and two Rad50 subunits. Zn(2+) is required as a cofactor.

In terms of biological role, part of the Rad50/Mre11 complex, which is involved in the early steps of DNA double-strand break (DSB) repair. The complex may facilitate opening of the processed DNA ends to aid in the recruitment of HerA and NurA. Rad50 controls the balance between DNA end bridging and DNA resection via ATP-dependent structural rearrangements of the Rad50/Mre11 complex. The chain is DNA double-strand break repair Rad50 ATPase from Nanoarchaeum equitans (strain Kin4-M).